Here is a 309-residue protein sequence, read N- to C-terminus: uncharacterized protein (309 aa).

Residues 1–16 (MAGNSRRRGAVRKAGT) show a composition bias toward basic residues. The interval 1–70 (MAGNSRRRGA…AKRTEETETV (70 aa)) is disordered. Positions 261, 281, and 290 each coordinate S-adenosyl-L-methionine.

This sequence belongs to the class IV-like SAM-binding methyltransferase superfamily. RNA methyltransferase TrmH family.

This is an uncharacterized protein from Mycobacterium avium (strain 104).